The following is a 415-amino-acid chain: MNIVEMLCTDVIVYMMDYLSDIDKINFLKTCSSFYNHRFCVKFNDFHSFDKIRDLDYSENFKRIVFTKTKNNVKSFTLNNSYDRIPIDAKHLIIGKLFKLSLENIIPRGITHLTIEEEYGSEINPGIINPEEIPDIVTYLNIKSRNIFIKKGAIPDSVTHLYFGSDYLSKDIIPKNVVYLRFGDFSRCVIGQRLVETRQVNDITVTTTRIESYIPESVACLHLGFSMSNKCLGERIIETQEMDGEKINTTKIVSYIPKNVTCLTIFNEVYKNTFDFIPKNVTKLNLFGEIMEMIDETIIPKNITTLGLACYRDLNKIKIPKKVTRLNFLFEEYMSNPKVLDIPEHITTISLKYTHDIFKKVVFNNILNLKIDSYYFEKKLYLPNSIKTLTIYGNYDKKVIKKLPNTINTLIFKHK.

The stretch at 148–185 (FIKKGAIPDSVTHLYFGSDYLSKDIIPKNVVYLRFGDF) is one FNIP repeat.

The sequence is that of Putative FNIP repeat-containing protein L415 from Acanthamoeba polyphaga mimivirus (APMV).